Here is a 465-residue protein sequence, read N- to C-terminus: Trigger factor (465 aa).

Residues 163-248 (GDVINFNFKG…INKIKENQPA (86 aa)) form the PPIase FKBP-type domain. A disordered region spans residues 431 to 465 (EIVNKNQNDNEIEQDKEQKDNNEEKIKQENNLENK). The span at 443-465 (EQDKEQKDNNEEKIKQENNLENK) shows a compositional bias: basic and acidic residues.

Belongs to the FKBP-type PPIase family. Tig subfamily.

It is found in the cytoplasm. It carries out the reaction [protein]-peptidylproline (omega=180) = [protein]-peptidylproline (omega=0). Functionally, involved in protein export. Acts as a chaperone by maintaining the newly synthesized protein in an open conformation. Functions as a peptidyl-prolyl cis-trans isomerase. The polypeptide is Trigger factor (Mesomycoplasma hyopneumoniae (strain J / ATCC 25934 / NCTC 10110) (Mycoplasma hyopneumoniae)).